The chain runs to 1405 residues: DNA-directed RNA polymerase subunit beta' (1405 aa).

Zn(2+)-binding residues include Cys70, Cys72, Cys85, and Cys88. Residues Asp460, Asp462, and Asp464 each coordinate Mg(2+). Zn(2+)-binding residues include Cys814, Cys888, Cys895, and Cys898.

The protein belongs to the RNA polymerase beta' chain family. In terms of assembly, the RNAP catalytic core consists of 2 alpha, 1 beta, 1 beta' and 1 omega subunit. When a sigma factor is associated with the core the holoenzyme is formed, which can initiate transcription. Requires Mg(2+) as cofactor. Zn(2+) is required as a cofactor.

It catalyses the reaction RNA(n) + a ribonucleoside 5'-triphosphate = RNA(n+1) + diphosphate. DNA-dependent RNA polymerase catalyzes the transcription of DNA into RNA using the four ribonucleoside triphosphates as substrates. The chain is DNA-directed RNA polymerase subunit beta' from Shewanella sediminis (strain HAW-EB3).